Here is a 362-residue protein sequence, read N- to C-terminus: Beta-ketoacyl-[acyl-carrier-protein] synthase III 2 (362 aa).

Catalysis depends on residues C113 and H251. The segment at 252-256 (QANIR) is ACP-binding. Residue N281 is part of the active site.

The protein belongs to the thiolase-like superfamily. FabH family. As to quaternary structure, homodimer.

Its subcellular location is the cytoplasm. It carries out the reaction malonyl-[ACP] + acetyl-CoA + H(+) = 3-oxobutanoyl-[ACP] + CO2 + CoA. It functions in the pathway lipid metabolism; fatty acid biosynthesis. Catalyzes the condensation reaction of fatty acid synthesis by the addition to an acyl acceptor of two carbons from malonyl-ACP. Catalyzes the first condensation reaction which initiates fatty acid synthesis and may therefore play a role in governing the total rate of fatty acid production. Possesses both acetoacetyl-ACP synthase and acetyl transacylase activities. Its substrate specificity determines the biosynthesis of branched-chain and/or straight-chain of fatty acids. The chain is Beta-ketoacyl-[acyl-carrier-protein] synthase III 2 from Vibrio cholerae serotype O1 (strain ATCC 39315 / El Tor Inaba N16961).